Here is a 101-residue protein sequence, read N- to C-terminus: MAKKSSIEKNNRRRKMTKNAAPKRARLKAIIADKDLPMEERFAATLKLAEMPRNSSATRIRNRCEITGRSRSVYRLNKLSRIAIRDLGSKGLVPGLVKSSW.

The span at 1 to 10 (MAKKSSIEKN) shows a compositional bias: basic and acidic residues. The interval 1–23 (MAKKSSIEKNNRRRKMTKNAAPK) is disordered. The segment covering 11 to 23 (NRRRKMTKNAAPK) has biased composition (basic residues).

It belongs to the universal ribosomal protein uS14 family. As to quaternary structure, part of the 30S ribosomal subunit. Contacts proteins S3 and S10.

Its function is as follows. Binds 16S rRNA, required for the assembly of 30S particles and may also be responsible for determining the conformation of the 16S rRNA at the A site. The sequence is that of Small ribosomal subunit protein uS14 from Rhodopseudomonas palustris (strain BisB5).